The following is a 34-amino-acid chain: Delta-theraphotoxin-Hm1b (34 aa).

3 disulfides stabilise this stretch: C2-C16, C9-C21, and C15-C28. A Phenylalanine amide modification is found at F34.

It belongs to the neurotoxin 10 (Hwtx-1) family. 09 (HaTx) subfamily. In terms of tissue distribution, expressed by the venom gland.

The protein resides in the secreted. Functionally, gating-modifier toxin that potently and selectively acts on Nav1.1/SCN1A and Nav1.3/SCN3A. It enhances hNav1.1/SCN1A currents and delays fast inactivation of the channel (EC(50)=11.6 nM), leading to a sustained current. Similar effects are observed at Nav1.3/SCN3A (EC(50)=11.8 nM), but with less sustained currents. When tested on Nav1.2/SCN2A, the native toxin decreases the peak current by 50% at saturating concentration, whereas the recombinant toxin only shows a weak decrease of peak current. The native toxin specifically activates the voltage-gated sodium channel Nav1.1/SCN1A in somatosensory neurons to elicit acute pain and mechanical allodynia. When tested on Nav1.1/SCN1A, the toxin induces a hyperpolarising shift of the voltage-dependence of steady-state activation, and induces a depolarizing shift in the voltage dependence of inactivation. In addition, it does not modify the recovery from fast inactivation in Nav1.1/SCN1A. The toxin hydrophobic face probably interacts with the domain IV voltage-sensor of Nav1.1/SCN1A and Nav1.3/SCN3A and may trap the voltage-sensing S4 helix in a partially activated state. In vivo, intracerebroventricular injection into mice elicits convulsions, spasms, tremors and rapid death. When injected into mouse hindpaw, the toxin elicits an immediate and robust response to pain. However, intraplantar injection of toxin does not cause neurogenic inflammation or alter sensitivity to heat, indicative of a modality-specific effect on mechanosensitive neurons. This chain is Delta-theraphotoxin-Hm1b, found in Heteroscodra maculata (Togo starburst tarantula).